Consider the following 178-residue polypeptide: Photosystem II extrinsic protein V (178 aa).

An N-terminal signal peptide occupies residues 1 to 38; the sequence is MFSKFFSLQKAFAAARRRLLILILVLGMAGYAWGPALA. Residues Cys71, Cys74, His75, and His126 each coordinate heme c.

The protein belongs to the cytochrome c family. PsbV subfamily. As to quaternary structure, PSII is composed of 1 copy each of membrane proteins PsbA, PsbB, PsbC, PsbD, PsbE, PsbF, PsbH, PsbI, PsbJ, PsbK, PsbL, PsbM, PsbT, PsbX, PsbY, PsbZ, Psb30/Ycf12, peripheral proteins PsbO, CyanoQ (PsbQ), PsbU, PsbV and a large number of cofactors. It forms dimeric complexes. Requires heme c as cofactor.

The protein resides in the cellular thylakoid membrane. In terms of biological role, one of the extrinsic, lumenal subunits of photosystem II (PSII). PSII is a light-driven water plastoquinone oxidoreductase, using light energy to abstract electrons from H(2)O, generating a proton gradient subsequently used for ATP formation. The extrinsic proteins stabilize the structure of photosystem II oxygen-evolving complex (OEC), the ion environment of oxygen evolution and protect the OEC against heat-induced inactivation. Low-potential cytochrome c that plays a role in the OEC of PSII. The chain is Photosystem II extrinsic protein V from Synechococcus sp. (strain JA-3-3Ab) (Cyanobacteria bacterium Yellowstone A-Prime).